We begin with the raw amino-acid sequence, 385 residues long: 4-hydroxy-3-methylbut-2-en-1-yl diphosphate synthase (flavodoxin) (385 aa).

Residues Cys-280, Cys-283, Cys-315, and Glu-322 each contribute to the [4Fe-4S] cluster site.

This sequence belongs to the IspG family. [4Fe-4S] cluster serves as cofactor.

It catalyses the reaction (2E)-4-hydroxy-3-methylbut-2-enyl diphosphate + oxidized [flavodoxin] + H2O + 2 H(+) = 2-C-methyl-D-erythritol 2,4-cyclic diphosphate + reduced [flavodoxin]. The protein operates within isoprenoid biosynthesis; isopentenyl diphosphate biosynthesis via DXP pathway; isopentenyl diphosphate from 1-deoxy-D-xylulose 5-phosphate: step 5/6. Functionally, converts 2C-methyl-D-erythritol 2,4-cyclodiphosphate (ME-2,4cPP) into 1-hydroxy-2-methyl-2-(E)-butenyl 4-diphosphate. This chain is 4-hydroxy-3-methylbut-2-en-1-yl diphosphate synthase (flavodoxin), found in Streptomyces griseus subsp. griseus (strain JCM 4626 / CBS 651.72 / NBRC 13350 / KCC S-0626 / ISP 5235).